Here is a 215-residue protein sequence, read N- to C-terminus: Pyrrolidone-carboxylate peptidase 1 (215 aa).

Residues E80, C143, and H167 contribute to the active site.

The protein belongs to the peptidase C15 family. In terms of assembly, homotetramer.

Its subcellular location is the cytoplasm. The enzyme catalyses Release of an N-terminal pyroglutamyl group from a polypeptide, the second amino acid generally not being Pro.. Removes 5-oxoproline from various penultimate amino acid residues except L-proline. The sequence is that of Pyrrolidone-carboxylate peptidase 1 from Ralstonia nicotianae (strain ATCC BAA-1114 / GMI1000) (Ralstonia solanacearum).